The sequence spans 490 residues: UDP-N-acetylmuramate--L-alanine ligase (490 aa).

122-128 (GTHGKTS) provides a ligand contact to ATP.

It belongs to the MurCDEF family.

The protein resides in the cytoplasm. It catalyses the reaction UDP-N-acetyl-alpha-D-muramate + L-alanine + ATP = UDP-N-acetyl-alpha-D-muramoyl-L-alanine + ADP + phosphate + H(+). Its pathway is cell wall biogenesis; peptidoglycan biosynthesis. Functionally, cell wall formation. The polypeptide is UDP-N-acetylmuramate--L-alanine ligase (Mycobacteroides abscessus (strain ATCC 19977 / DSM 44196 / CCUG 20993 / CIP 104536 / JCM 13569 / NCTC 13031 / TMC 1543 / L948) (Mycobacterium abscessus)).